Consider the following 415-residue polypeptide: Ribulose bisphosphate carboxylase large chain (415 aa).

Residues Asn-101 and Thr-151 each contribute to the substrate site. The Proton acceptor role is filled by Lys-153. Residue Lys-155 participates in substrate binding. Mg(2+)-binding residues include Lys-179, Asp-181, and Glu-182. An N6-carboxylysine modification is found at Lys-179. Residue His-272 is the Proton acceptor of the active site. Substrate contacts are provided by Arg-273, His-305, and Ser-357.

Belongs to the RuBisCO large chain family. Type I subfamily. In terms of assembly, heterohexadecamer of 8 large chains and 8 small chains; disulfide-linked. The disulfide link is formed within the large subunit homodimers. It depends on Mg(2+) as a cofactor. The disulfide bond which can form in the large chain dimeric partners within the hexadecamer appears to be associated with oxidative stress and protein turnover.

The protein resides in the plastid. The protein localises to the chloroplast. The catalysed reaction is 2 (2R)-3-phosphoglycerate + 2 H(+) = D-ribulose 1,5-bisphosphate + CO2 + H2O. It catalyses the reaction D-ribulose 1,5-bisphosphate + O2 = 2-phosphoglycolate + (2R)-3-phosphoglycerate + 2 H(+). In terms of biological role, ruBisCO catalyzes two reactions: the carboxylation of D-ribulose 1,5-bisphosphate, the primary event in carbon dioxide fixation, as well as the oxidative fragmentation of the pentose substrate in the photorespiration process. Both reactions occur simultaneously and in competition at the same active site. The chain is Ribulose bisphosphate carboxylase large chain from Cibotium barometz (Scythian lamb).